The primary structure comprises 790 residues: Phenylalanine--tRNA ligase beta subunit (790 aa).

Positions 40-149 (AEKVSGVVVG…IDAPVGTDIN (110 aa)) constitute a tRNA-binding domain. One can recognise a B5 domain in the interval 402–479 (NKQIKINLSI…RIYGYSKLPE (78 aa)). Residues D457, D463, E466, and E467 each contribute to the Mg(2+) site. The region spanning 698-789 (SKYPSVSRDI…LKTKFNIEQR (92 aa)) is the FDX-ACB domain.

This sequence belongs to the phenylalanyl-tRNA synthetase beta subunit family. Type 1 subfamily. Tetramer of two alpha and two beta subunits. It depends on Mg(2+) as a cofactor.

The protein resides in the cytoplasm. It carries out the reaction tRNA(Phe) + L-phenylalanine + ATP = L-phenylalanyl-tRNA(Phe) + AMP + diphosphate + H(+). The chain is Phenylalanine--tRNA ligase beta subunit from Francisella tularensis subsp. tularensis (strain SCHU S4 / Schu 4).